Here is a 336-residue protein sequence, read N- to C-terminus: MIVLGLETSCDETGLALYDSELGLRGQVLYSQIKLHAEYGGVVPELASRDHVRKLIPLMNQLLEQSGVKKQEIDAVAYTRGPGLMGALMTGALFGRTLAFSLNKPAIGVHHMEGHMLAPLLSSQPPEFPFVALLVSGGHTQLMVVHGIGQYELLGESIDDAAGEAFDKVAKMMNLPYPGGPNIAKLALSGDPLAFEFPRPMLHQGLDFSFSGLKTAVSVQLKKLNGENRDADIAASFQEAIVDTLVKKSVKALKQTGLKRLVIAGGVSANLRLREQLETSLARIKAQVYYAEPALCTDNGAMIAFAGYQRLKAGQHDGLAVTTTPRWPMTELTIPE.

Residues His111 and His115 each coordinate Fe cation. Substrate-binding positions include 134–138 (LVSGG), Asp167, Gly180, and Asn270. Asp298 lines the Fe cation pocket.

Belongs to the KAE1 / TsaD family. The cofactor is Fe(2+).

The protein localises to the cytoplasm. The enzyme catalyses L-threonylcarbamoyladenylate + adenosine(37) in tRNA = N(6)-L-threonylcarbamoyladenosine(37) in tRNA + AMP + H(+). Its function is as follows. Required for the formation of a threonylcarbamoyl group on adenosine at position 37 (t(6)A37) in tRNAs that read codons beginning with adenine. Is involved in the transfer of the threonylcarbamoyl moiety of threonylcarbamoyl-AMP (TC-AMP) to the N6 group of A37, together with TsaE and TsaB. TsaD likely plays a direct catalytic role in this reaction. This chain is tRNA N6-adenosine threonylcarbamoyltransferase, found in Acinetobacter baumannii (strain SDF).